Reading from the N-terminus, the 85-residue chain is Cell division protein ZapA (85 aa).

A coiled-coil region spans residues 59-85; the sequence is TAVNVVHDYMKLQEKYEILERQLKEKE.

This sequence belongs to the ZapA family. Type 2 subfamily. In terms of assembly, homodimer. Interacts with FtsZ.

It is found in the cytoplasm. Activator of cell division through the inhibition of FtsZ GTPase activity, therefore promoting FtsZ assembly into bundles of protofilaments necessary for the formation of the division Z ring. It is recruited early at mid-cell but it is not essential for cell division. The chain is Cell division protein ZapA from Bacillus velezensis (strain DSM 23117 / BGSC 10A6 / LMG 26770 / FZB42) (Bacillus amyloliquefaciens subsp. plantarum).